The following is a 424-amino-acid chain: MTAITDIIAREILDSRGNPTVEVDVYLEDGSMGRAAVPSGASTGAHEAVELRDGGKRYLGKGVEKAVEAANTEIFDAIGGIDAENQIQIDNIMIELDGTPNKSRLGANAILGVSLAVAKAAAQASGLPLYRYVGGASACLLPVPMMNIINGGAHADNPIDFQEFMILPVGADSIAEAVRMGSEVFHTLRKELAAQGHNTNVGDEGGFAPGLKSAPEALDFIMKSIEKAGYKPGDDMCLGLDCASTEFFKDGKYVLEGEGRTLESGAMAEYLAELAANYPIISIEDGMAEDDWDGWKTLTDLAGKKTQLVGDDLFVTNSARLRDGIRMGVANSILVKVNQIGTLTETLDAVNTAHKAAYTAVMSHRSGETEDSTIADLAVATNCGQIKTGSLSRSDRLAKYNQLIRIEEGLGPQAQYAGRSIIRG.

A (2R)-2-phosphoglycerate-binding site is contributed by Gln-162. Catalysis depends on Glu-204, which acts as the Proton donor. 3 residues coordinate Mg(2+): Asp-241, Glu-284, and Asp-311. (2R)-2-phosphoglycerate is bound by residues Lys-336, Arg-365, Ser-366, and Lys-387. Lys-336 serves as the catalytic Proton acceptor.

Belongs to the enolase family. Requires Mg(2+) as cofactor.

The protein localises to the cytoplasm. Its subcellular location is the secreted. The protein resides in the cell surface. It catalyses the reaction (2R)-2-phosphoglycerate = phosphoenolpyruvate + H2O. Its pathway is carbohydrate degradation; glycolysis; pyruvate from D-glyceraldehyde 3-phosphate: step 4/5. Its function is as follows. Catalyzes the reversible conversion of 2-phosphoglycerate (2-PG) into phosphoenolpyruvate (PEP). It is essential for the degradation of carbohydrates via glycolysis. This is Enolase from Rhizobium johnstonii (strain DSM 114642 / LMG 32736 / 3841) (Rhizobium leguminosarum bv. viciae).